The chain runs to 160 residues: SKP1-like protein 1A (160 aa).

Residues 102 to 160 (ILAANYLNIKNLLDLTCQTVADMIKGKTPEEIRTTFNIKNDFTPEEEEEVRRENQWAFE) are interaction with the F-box domain of F-box proteins.

It belongs to the SKP1 family. In terms of assembly, part of a SCF E3 ubiquitin ligase complex composed of SKP1, CUL1, RBX1 (RBX1A or RBX1B) and F-box proteins. Interacts with SKIP1, SKIP2, SKIP3, SKIP4, SKIP6, FIB1/SKIP7, SKIP8, PP2A11/SKIP10, SKIP11, PP2B11/SKIP12, PP2A14/SKIP13, SKIP14, SKIP15, SKIP16, SKIP19/FBL20, SKIP20, PP2B1/SKIP21, SKIP22, SKIP23, SKIP24, SKIP25, TULP10/SKIP26, SKIP27, SKIP28/MEE11, AFR/SKIP29, SKIP30, SKIP31, SKIP32/FBP7, SKIP33, SKIP35, ADO1/ZTL, ADO2/LKP2, ADO3/FKF1, AFR, COI1, DOR, EBF1, EBF2, EID1, ORE9, PP2A13/SKIP9, TIR1, UFO, SKP2A, CPR1/CPR30, FBL17, NUP58, At1g55000, At1g67340, At1g78100, At3g04660, At3g61590, At4g38940 and At5g49610. The SKP1A subunit of the SCF E3 ubiquitin ligase complex can interact directly with KIN10, KIN11 and the proteasome subunit PAD1. This interaction can be disrupted by PRL1. In case of polerovirus infection, part of a SCF P0 complex composed of the viral silencing suppressor P0, SKP1 and CUL1. Interacts with turnip yellows virus P0. Interacts with VBF and Agrobacterium virF. Binds to KIB1. As to expression, accumulates only in meristematic cells. Expressed in inflorescence, shoot and root apical meristems, as well as in developing organs such as gametocytes and seeds. Also detected in cortical layer and epidermis of roots, leaves, pith and vascular bundle of young stem, young floral buds and organ primordia, pollen and through the valve of siliques. Not detectable in mature root tissues.

The protein resides in the nucleus. It localises to the cytoplasm. The protein localises to the cytoskeleton. Its subcellular location is the spindle. It is found in the phragmoplast. The protein operates within protein modification; protein ubiquitination. Involved in ubiquitination and subsequent proteasomal degradation of target proteins. Together with CUL1, RBX1 and a F-box protein, it forms a SCF E3 ubiquitin ligase complex. The functional specificity of this complex depends on the type of F-box protein. In the SCF complex, it serves as an adapter that links the F-box protein to CUL1. SCF(UFO) is required for vegetative and floral organ development as well as for male gametogenesis. SCF(TIR1) is involved in auxin signaling pathway. SCF(COI1) regulates responses to jasmonates. SCF(EID1) and SCF(AFR) are implicated in phytochrome A light signaling. SCF(ADO1), SCF(ADO2), SCF(ADO3) are related to the circadian clock. SCF(ORE9) seems to be involved in senescence. SCF(EBF1/EBF2) may regulate ethylene signaling. Plays a role during embryogenesis and early postembryonic development, especially during cell elongation and division. Contributes to the correct chromosome segregation during tetrad formation. This Arabidopsis thaliana (Mouse-ear cress) protein is SKP1-like protein 1A.